The primary structure comprises 225 residues: ATP synthase subunit a (225 aa).

The next 5 membrane-spanning stretches (helical) occupy residues 16 to 36 (LFVY…VAKL), 79 to 99 (LVAT…IPGF), 105 to 125 (SLNL…FEGI), 176 to 196 (LFLL…AYAL), and 202 to 222 (VLQT…AVAI).

It belongs to the ATPase A chain family. In terms of assembly, F-type ATPases have 2 components, CF(1) - the catalytic core - and CF(0) - the membrane proton channel. CF(1) has five subunits: alpha(3), beta(3), gamma(1), delta(1), epsilon(1). CF(0) has three main subunits: a(1), b(2) and c(9-12). The alpha and beta chains form an alternating ring which encloses part of the gamma chain. CF(1) is attached to CF(0) by a central stalk formed by the gamma and epsilon chains, while a peripheral stalk is formed by the delta and b chains.

It is found in the cell inner membrane. In terms of biological role, key component of the proton channel; it plays a direct role in the translocation of protons across the membrane. The sequence is that of ATP synthase subunit a from Campylobacter curvus (strain 525.92).